The following is a 331-amino-acid chain: Beta-ketoacyl-[acyl-carrier-protein] synthase III (331 aa).

Residues Cys-116 and His-256 contribute to the active site. Positions 257 to 261 (QANTR) are ACP-binding. Asn-286 is an active-site residue.

It belongs to the thiolase-like superfamily. FabH family. As to quaternary structure, homodimer.

It is found in the cytoplasm. It catalyses the reaction malonyl-[ACP] + acetyl-CoA + H(+) = 3-oxobutanoyl-[ACP] + CO2 + CoA. The protein operates within lipid metabolism; fatty acid biosynthesis. Functionally, catalyzes the condensation reaction of fatty acid synthesis by the addition to an acyl acceptor of two carbons from malonyl-ACP. Catalyzes the first condensation reaction which initiates fatty acid synthesis and may therefore play a role in governing the total rate of fatty acid production. Possesses both acetoacetyl-ACP synthase and acetyl transacylase activities. Its substrate specificity determines the biosynthesis of branched-chain and/or straight-chain of fatty acids. In Caldanaerobacter subterraneus subsp. tengcongensis (strain DSM 15242 / JCM 11007 / NBRC 100824 / MB4) (Thermoanaerobacter tengcongensis), this protein is Beta-ketoacyl-[acyl-carrier-protein] synthase III.